A 203-amino-acid polypeptide reads, in one-letter code: Outer-membrane lipoprotein carrier protein (203 aa).

The first 21 residues, 1 to 21, serve as a signal peptide directing secretion; the sequence is MKKQLMTSCLFAAVLAAPAFA.

Belongs to the LolA family. In terms of assembly, monomer.

Its subcellular location is the periplasm. Functionally, participates in the translocation of lipoproteins from the inner membrane to the outer membrane. Only forms a complex with a lipoprotein if the residue after the N-terminal Cys is not an aspartate (The Asp acts as a targeting signal to indicate that the lipoprotein should stay in the inner membrane). This is Outer-membrane lipoprotein carrier protein from Sodalis glossinidius (strain morsitans).